The chain runs to 627 residues: Putative polyketide hydroxylase (627 aa).

FAD-binding positions include 22 to 51 (PVLV…LVER) and 309 to 319 (YRSGRVLLAGD). Positions 370–469 (AEATSARAAH…GGGPGGGGPQ (100 aa)) are disordered. The segment covering 395 to 469 (AGGGGPGAGT…GGGPGGGGPQ (75 aa)) has biased composition (gly residues).

The protein belongs to the PheA/TfdB FAD monooxygenase family. FAD is required as a cofactor.

In terms of biological role, involved in developmentally regulated synthesis of a compound biosynthetically related to polyketide antibiotics which is essential for spore color in Streptococcus coelicolor. The chain is Putative polyketide hydroxylase from Streptomyces coelicolor (strain ATCC BAA-471 / A3(2) / M145).